Reading from the N-terminus, the 271-residue chain is Carboxy-terminal domain RNA polymerase II polypeptide A small phosphatase 2 (271 aa).

The residue at position 5 (S5) is a Phosphoserine. The region spanning 97-255 is the FCP1 homology domain; sequence EDQGRICVVI…LNLIPIFEEL (159 aa). D107 serves as the catalytic 4-aspartylphosphate intermediate. Residues D107, D109, and N218 each contribute to the Mg(2+) site. The active-site Proton donor is D109.

As to quaternary structure, monomer. Interacts with REST. It depends on Mg(2+) as a cofactor. In terms of tissue distribution, expression is restricted to non-neuronal tissues. Highest expression in pancreas and lowest in liver.

Its subcellular location is the nucleus. The catalysed reaction is O-phospho-L-seryl-[protein] + H2O = L-seryl-[protein] + phosphate. It carries out the reaction O-phospho-L-threonyl-[protein] + H2O = L-threonyl-[protein] + phosphate. Its function is as follows. Preferentially catalyzes the dephosphorylation of 'Ser-5' within the tandem 7 residue repeats in the C-terminal domain (CTD) of the largest RNA polymerase II subunit POLR2A. Negatively regulates RNA polymerase II transcription, possibly by controlling the transition from initiation/capping to processive transcript elongation. Recruited by REST to neuronal genes that contain RE-1 elements, leading to neuronal gene silencing in non-neuronal cells. May contribute to the development of sarcomas. This chain is Carboxy-terminal domain RNA polymerase II polypeptide A small phosphatase 2 (CTDSP2), found in Homo sapiens (Human).